Reading from the N-terminus, the 297-residue chain is ClpXP adapter protein SpxH (297 aa).

It belongs to the SpxH family. Interacts with Spx.

The protein resides in the cytoplasm. Adapter protein required for efficient degradation of Spx by ClpXP under non-stress conditions. Interaction with Spx stabilizes Spx and exposes the C-terminus of Spx for recognition and proteolysis by ClpXP. The protein is ClpXP adapter protein SpxH of Bacillus cereus (strain ATCC 10987 / NRS 248).